We begin with the raw amino-acid sequence, 313 residues long: Acetaldehyde dehydrogenase (313 aa).

12-15 (SGNI) provides a ligand contact to NAD(+). The active-site Acyl-thioester intermediate is Cys-132. NAD(+) contacts are provided by residues 163–171 (SAGPGTRAN) and Asn-291.

Belongs to the acetaldehyde dehydrogenase family.

The catalysed reaction is acetaldehyde + NAD(+) + CoA = acetyl-CoA + NADH + H(+). This chain is Acetaldehyde dehydrogenase (bphG), found in Burkholderia cepacia (Pseudomonas cepacia).